We begin with the raw amino-acid sequence, 379 residues long: Carbamoyl phosphate synthase small chain (379 aa).

The CPSase stretch occupies residues 1 to 188 (MSTPAILALA…ELGKGFTQPE (188 aa)). Residues S47, G240, and G242 each coordinate L-glutamine. The Glutamine amidotransferase type-1 domain maps to 192-379 (HVVAYDYGVK…FIELIEAAKK (188 aa)). C269 (nucleophile) is an active-site residue. L-glutamine-binding residues include L270, Q273, N311, G313, and F314. Active-site residues include H353 and E355.

It belongs to the CarA family. As to quaternary structure, composed of two chains; the small (or glutamine) chain promotes the hydrolysis of glutamine to ammonia, which is used by the large (or ammonia) chain to synthesize carbamoyl phosphate. Tetramer of heterodimers (alpha,beta)4.

The enzyme catalyses hydrogencarbonate + L-glutamine + 2 ATP + H2O = carbamoyl phosphate + L-glutamate + 2 ADP + phosphate + 2 H(+). The catalysed reaction is L-glutamine + H2O = L-glutamate + NH4(+). Its pathway is amino-acid biosynthesis; L-arginine biosynthesis; carbamoyl phosphate from bicarbonate: step 1/1. The protein operates within pyrimidine metabolism; UMP biosynthesis via de novo pathway; (S)-dihydroorotate from bicarbonate: step 1/3. Functionally, small subunit of the glutamine-dependent carbamoyl phosphate synthetase (CPSase). CPSase catalyzes the formation of carbamoyl phosphate from the ammonia moiety of glutamine, carbonate, and phosphate donated by ATP, constituting the first step of 2 biosynthetic pathways, one leading to arginine and/or urea and the other to pyrimidine nucleotides. The small subunit (glutamine amidotransferase) binds and cleaves glutamine to supply the large subunit with the substrate ammonia. The sequence is that of Carbamoyl phosphate synthase small chain from Acinetobacter baylyi (strain ATCC 33305 / BD413 / ADP1).